The sequence spans 156 residues: Flagellar assembly factor FliW (156 aa).

It belongs to the FliW family. As to quaternary structure, interacts with translational regulator CsrA and flagellin(s).

It localises to the cytoplasm. In terms of biological role, acts as an anti-CsrA protein, binds CsrA and prevents it from repressing translation of its target genes, one of which is flagellin. Binds to flagellin and participates in the assembly of the flagellum. The polypeptide is Flagellar assembly factor FliW (Syntrophomonas wolfei subsp. wolfei (strain DSM 2245B / Goettingen)).